Consider the following 89-residue polypeptide: Large ribosomal subunit protein bL28 (89 aa).

It belongs to the bacterial ribosomal protein bL28 family.

The chain is Large ribosomal subunit protein bL28 from Chlamydia abortus (strain DSM 27085 / S26/3) (Chlamydophila abortus).